Reading from the N-terminus, the 280-residue chain is Soluble inorganic pyrophosphatase 1, chloroplastic (280 aa).

A diphosphate-binding site is contributed by arginine 120. Residues aspartate 152, aspartate 157, and aspartate 189 each coordinate Mg(2+).

As to quaternary structure, monomer. Requires Mg(2+) as cofactor. Post-translationally, the N-terminus is blocked.

The protein resides in the plastid. The protein localises to the chloroplast. It carries out the reaction diphosphate + H2O = 2 phosphate + H(+). This is Soluble inorganic pyrophosphatase 1, chloroplastic (ppa1) from Chlamydomonas reinhardtii (Chlamydomonas smithii).